Here is a 66-residue protein sequence, read N- to C-terminus: Cold shock-like protein CspLB (66 aa).

The 60-residue stretch at 4–63 (GTVKWFNSEKGFGFIEVEGGDDVFVHFSAIEGEGFKTLDEGQSVEFEIVEGQRGPQAEKV) folds into the CSD domain.

As to quaternary structure, homodimer.

The protein localises to the cytoplasm. The polypeptide is Cold shock-like protein CspLB (cspLB) (Listeria monocytogenes serovar 1/2a (strain ATCC BAA-679 / EGD-e)).